The chain runs to 130 residues: Small ribosomal subunit protein uS9 (130 aa).

Belongs to the universal ribosomal protein uS9 family.

This is Small ribosomal subunit protein uS9 from Shewanella pealeana (strain ATCC 700345 / ANG-SQ1).